Here is a 766-residue protein sequence, read N- to C-terminus: Single-minded homolog 1 (766 aa).

The region spanning 1 to 53 (MKEKSKNAARTRREKENSEFYELAKLLPLPSAITSQLDKASIIRLTTSYLKMR) is the bHLH domain. PAS domains follow at residues 77–147 (GREL…QPYH) and 218–288 (PPSA…LVKG). Positions 292-335 (TKYYRFLAKHGGWVWVQSYATIVHNSRSSRPHCIVSVNYVLTDT) constitute a PAC domain. Residues 336–766 (EYKGLQLSLD…GTSVIITNGS (431 aa)) form the Single-minded C-terminal domain. The segment covering 353–365 (AFSYTSSSTPTMT) has biased composition (polar residues). 2 disordered regions span residues 353-431 (AFSY…SQHD) and 528-563 (WDED…EPSK). A Nuclear localization signal motif is present at residues 368-387 (RKGAKSRLSSSKSKSRTSPY). Residues 373–385 (SRLSSSKSKSRTS) are compositionally biased toward low complexity. Positions 394–404 (HTERSESDHDS) are enriched in basic and acidic residues.

Efficient DNA binding requires dimerization with another bHLH protein. Heterodimer; forms a heterodimer with ARNT, ARNT2.

The protein localises to the nucleus. Transcriptional factor that may have pleiotropic effects during embryogenesis and in the adult. This chain is Single-minded homolog 1 (SIM1), found in Homo sapiens (Human).